We begin with the raw amino-acid sequence, 785 residues long: Terminal nucleotidyltransferase 4A (785 aa).

Residues 56–184 are disordered; it reads AAGRAAPAAG…QFHPGRRKRE (129 aa). Over residues 68–85 the composition is skewed to pro residues; that stretch reads GPAPAASSPPPAPGPAAL. 2 stretches are compositionally biased toward low complexity: residues 86–98 and 106–145; these read PPALLTALGPAAD and SPSLSSSSSSSSSNAESGTESPGCSSSSSSSTSLGRAGSG. 2 residues coordinate Mg(2+): Asp290 and Asp292. Residues Gly353, Lys378, Ser396, and Tyr397 each contribute to the ATP site. Positions 421 to 480 constitute a PAP-associated domain; sequence NLGMLLVEFFELYGRNFNYLKTGIRIKEGGAYIAKEEIMKAMTSGYRPSMLCIEDPLLPG. ATP is bound by residues Asn481 and Arg485. A compositionally biased stretch (low complexity) spans 593–611; sequence PQLLSSGSSASSVSSLSGS. Disordered regions lie at residues 593–625 and 731–785; these read PQLLSSGSSASSVSSLSGSDIDSDTPPCTTPSV and KGSH…SLSR. Residues 757–774 are compositionally biased toward basic residues; that stretch reads RGHHQYNRTGWRRKKHAH.

This sequence belongs to the DNA polymerase type-B-like family. As to quaternary structure, component of a nuclear TRAMP-like complex, an ATP-dependent exosome regulatory complex consisting of a helicase (MTREX), an oligadenylate polymerase (TENT4B or TENT4A), and a substrate specific RNA-binding factor (ZCCHC7 or ZCCHC8). Several TRAMP-like complexes exist with specific compositions and are associated with nuclear, or nucleolar RNA exosomes. It depends on Mg(2+) as a cofactor. Mn(2+) is required as a cofactor.

The protein resides in the cytoplasm. The protein localises to the nucleus. Its subcellular location is the nucleoplasm. The enzyme catalyses RNA(n) + ATP = RNA(n)-3'-adenine ribonucleotide + diphosphate. Terminal nucleotidyltransferase that catalyzes preferentially the transfer of ATP and GTP on RNA 3' poly(A) tail creating a heterogeneous 3' poly(A) tail leading to mRNAs stabilization by protecting mRNAs from active deadenylation. Also functions as a catalytic subunit of a TRAMP-like complex which has a poly(A) RNA polymerase activity and is involved in a post-transcriptional quality control mechanism. Polyadenylation with short oligo(A) tails is required for the degradative activity of the exosome on several of its nuclear RNA substrates. Has no terminal uridylyltransferase activity, and does not play a role in replication-dependent histone mRNA degradation via uridylation. This Mus musculus (Mouse) protein is Terminal nucleotidyltransferase 4A.